The primary structure comprises 429 residues: Glucose-6-phosphate isomerase (429 aa).

The Proton donor role is filled by Glu-282. Catalysis depends on residues His-303 and Lys-418.

It belongs to the GPI family.

It localises to the cytoplasm. It carries out the reaction alpha-D-glucose 6-phosphate = beta-D-fructose 6-phosphate. The protein operates within carbohydrate biosynthesis; gluconeogenesis. Its pathway is carbohydrate degradation; glycolysis; D-glyceraldehyde 3-phosphate and glycerone phosphate from D-glucose: step 2/4. Functionally, catalyzes the reversible isomerization of glucose-6-phosphate to fructose-6-phosphate. In Mesomycoplasma hyopneumoniae (strain 7448) (Mycoplasma hyopneumoniae), this protein is Glucose-6-phosphate isomerase.